Here is a 176-residue protein sequence, read N- to C-terminus: MKSLVLYSSLTGNTKKIAYTIYDEIQEEKDIKDVNELVDYGIDYENYDIVFLGYWVDKGICDKNSKQVLENIHNKKIALFGTMGASEKGSYGASIIEKIESIIPKDNEILGSFICQGKIAEGLKAKYKEMLKLSPDNEHIRQQLNNHEESQSHPDEQEIYEASMFAKNMMIKASIV.

It participates in porphyrin-containing compound metabolism; protoheme degradation. Its function is as follows. Together with BilR, catalyzes reduction of mesobilirubin and/or bilirubin to urobilinogen, a key step during heme degradation. BilS is probably involved in electron transfer for the bilirubin reductase BilR. The chain is Flavodoxin-like domain-containing protein BilS from Clostridioides difficile (strain CD3).